Here is an 88-residue protein sequence, read N- to C-terminus: ATP synthase F(0) complex subunit f, mitochondrial (88 aa).

At A2 the chain carries N-acetylalanine. S3 carries the phosphoserine modification. Position 16 is an N6-acetyllysine (K16). Residues 62–79 (MVLAAYVVFNYCRSYKEL) form a helical membrane-spanning segment.

The protein belongs to the ATPase F chain family. Component of the ATP synthase complex composed at least of ATP5F1A/subunit alpha, ATP5F1B/subunit beta, ATP5MC1/subunit c (homooctomer), MT-ATP6/subunit a, MT-ATP8/subunit 8, ATP5ME/subunit e, ATP5MF/subunit f, ATP5MG/subunit g, ATP5MK/subunit k, ATP5MJ/subunit j, ATP5F1C/subunit gamma, ATP5F1D/subunit delta, ATP5F1E/subunit epsilon, ATP5PF/subunit F6, ATP5PB/subunit b, ATP5PD/subunit d, ATP5PO/subunit OSCP. ATP synthase complex consists of a soluble F(1) head domain (subunits alpha(3) and beta(3)) - the catalytic core - and a membrane F(0) domain - the membrane proton channel (subunits c, a, 8, e, f, g, k and j). These two domains are linked by a central stalk (subunits gamma, delta, and epsilon) rotating inside the F1 region and a stationary peripheral stalk (subunits F6, b, d, and OSCP).

The protein resides in the mitochondrion. It is found in the mitochondrion inner membrane. Functionally, subunit f, of the mitochondrial membrane ATP synthase complex (F(1)F(0) ATP synthase or Complex V) that produces ATP from ADP in the presence of a proton gradient across the membrane which is generated by electron transport complexes of the respiratory chain. ATP synthase complex consist of a soluble F(1) head domain - the catalytic core - and a membrane F(1) domain - the membrane proton channel. These two domains are linked by a central stalk rotating inside the F(1) region and a stationary peripheral stalk. During catalysis, ATP synthesis in the catalytic domain of F(1) is coupled via a rotary mechanism of the central stalk subunits to proton translocation. In vivo, can only synthesize ATP although its ATP hydrolase activity can be activated artificially in vitro. Part of the complex F(0) domain. The protein is ATP synthase F(0) complex subunit f, mitochondrial of Sus scrofa (Pig).